The primary structure comprises 410 residues: Cysteine desulfurase IscS (410 aa).

Residues 80–81 (AT), N160, Q188, and 208–210 (SGH) contribute to the pyridoxal 5'-phosphate site. The residue at position 211 (K211) is an N6-(pyridoxal phosphate)lysine. Residue T248 coordinates pyridoxal 5'-phosphate. The active-site Cysteine persulfide intermediate is C334. C334 contributes to the [2Fe-2S] cluster binding site.

Belongs to the class-V pyridoxal-phosphate-dependent aminotransferase family. NifS/IscS subfamily. As to quaternary structure, homodimer. Forms a heterotetramer with IscU, interacts with other sulfur acceptors. Pyridoxal 5'-phosphate serves as cofactor.

It is found in the cytoplasm. It carries out the reaction (sulfur carrier)-H + L-cysteine = (sulfur carrier)-SH + L-alanine. It functions in the pathway cofactor biosynthesis; iron-sulfur cluster biosynthesis. Its function is as follows. Master enzyme that delivers sulfur to a number of partners involved in Fe-S cluster assembly, tRNA modification or cofactor biosynthesis. Catalyzes the removal of elemental sulfur atoms from cysteine to produce alanine. Functions as a sulfur delivery protein for Fe-S cluster synthesis onto IscU, an Fe-S scaffold assembly protein, as well as other S acceptor proteins. The polypeptide is Cysteine desulfurase IscS (Rickettsia rickettsii (strain Iowa)).